The sequence spans 586 residues: Succinate dehydrogenase flavoprotein subunit (586 aa).

FAD contacts are provided by residues 10-15 (GGGLAG) and 33-48 (SIVPVKRSHSVCAQGG). The residue at position 41 (histidine 41) is a Tele-8alpha-FAD histidine. Residues histidine 236 and serine 250 each coordinate substrate. The active-site Proton acceptor is the arginine 285. Histidine 352 provides a ligand contact to substrate. Glutamate 376 contacts FAD. Arginine 386 is a binding site for substrate. 391–392 (SL) provides a ligand contact to FAD.

This sequence belongs to the FAD-dependent oxidoreductase 2 family. FRD/SDH subfamily. As to quaternary structure, in B.subtilis succinate dehydrogenase forms part of an enzyme complex containing three subunits: a flavoprotein, an iron-sulfur protein and cytochrome b-558. Interacts with FloT. The cofactor is FAD.

It is found in the cell membrane. It localises to the membrane raft. It catalyses the reaction a quinone + succinate = fumarate + a quinol. It functions in the pathway carbohydrate metabolism; tricarboxylic acid cycle; fumarate from succinate (bacterial route): step 1/1. The protein is Succinate dehydrogenase flavoprotein subunit (sdhA) of Bacillus subtilis (strain 168).